Reading from the N-terminus, the 119-residue chain is Phosphoribosyl-AMP cyclohydrolase (119 aa).

Residue aspartate 78 coordinates Mg(2+). A Zn(2+)-binding site is contributed by cysteine 79. Mg(2+) is bound by residues aspartate 80 and aspartate 82. 2 residues coordinate Zn(2+): cysteine 95 and cysteine 102.

The protein belongs to the PRA-CH family. As to quaternary structure, homodimer. Mg(2+) serves as cofactor. Zn(2+) is required as a cofactor.

Its subcellular location is the cytoplasm. The enzyme catalyses 1-(5-phospho-beta-D-ribosyl)-5'-AMP + H2O = 1-(5-phospho-beta-D-ribosyl)-5-[(5-phospho-beta-D-ribosylamino)methylideneamino]imidazole-4-carboxamide. The protein operates within amino-acid biosynthesis; L-histidine biosynthesis; L-histidine from 5-phospho-alpha-D-ribose 1-diphosphate: step 3/9. In terms of biological role, catalyzes the hydrolysis of the adenine ring of phosphoribosyl-AMP. This Jannaschia sp. (strain CCS1) protein is Phosphoribosyl-AMP cyclohydrolase.